We begin with the raw amino-acid sequence, 354 residues long: S-adenosylmethionine:tRNA ribosyltransferase-isomerase (354 aa).

The protein belongs to the QueA family. In terms of assembly, monomer.

The protein resides in the cytoplasm. It carries out the reaction 7-aminomethyl-7-carbaguanosine(34) in tRNA + S-adenosyl-L-methionine = epoxyqueuosine(34) in tRNA + adenine + L-methionine + 2 H(+). It functions in the pathway tRNA modification; tRNA-queuosine biosynthesis. Its function is as follows. Transfers and isomerizes the ribose moiety from AdoMet to the 7-aminomethyl group of 7-deazaguanine (preQ1-tRNA) to give epoxyqueuosine (oQ-tRNA). This Salmonella newport (strain SL254) protein is S-adenosylmethionine:tRNA ribosyltransferase-isomerase.